The sequence spans 209 residues: Probable glutathione peroxidase 8 (209 aa).

Position 1 is an N-acetylmethionine (Met1). The helical transmembrane segment at 18–40 (VFAVLLSIVLCTVTLFLLQLKFL) threads the bilayer. Residue Cys79 is part of the active site.

Belongs to the glutathione peroxidase family.

The protein resides in the membrane. It carries out the reaction 2 glutathione + H2O2 = glutathione disulfide + 2 H2O. The sequence is that of Probable glutathione peroxidase 8 (GPX8) from Homo sapiens (Human).